The sequence spans 282 residues: Phenylethanolamine N-methyltransferase (282 aa).

S7 is modified (phosphoserine). Residues Y35, Y40, G79–S80, Y85, D101, N106, D158–V159, and A181 each bind S-adenosyl-L-methionine. Residues E219 and D267 each coordinate octopamine.

It catalyses the reaction phenylethanolamine + S-adenosyl-L-methionine = N-methylphenylethanolamine + S-adenosyl-L-homocysteine + H(+). It carries out the reaction (R)-noradrenaline + S-adenosyl-L-methionine = (R)-adrenaline + S-adenosyl-L-homocysteine + H(+). The enzyme catalyses (R)-normetanephrine + S-adenosyl-L-methionine = (R)-metanephrine + S-adenosyl-L-homocysteine + H(+). The catalysed reaction is (R)-octopamine + S-adenosyl-L-methionine = (R)-synephrine + S-adenosyl-L-homocysteine + H(+). It participates in catecholamine biosynthesis; (R)-adrenaline biosynthesis; (R)-adrenaline from (R)-noradrenaline: step 1/1. Inhibited by methyl methanethiosulfonate, phenylglyoxal, tetranitromethane and diethyl pyrocarbonate. Inhibited by 4-oxo-1,4-dihydro-quinoline-3,7-dicarboxylic acid, 4-(benzo[d][1,3]dioxol-5-ylamino)-4-oxobutanoic acid and 1,4-diaminonaphthalene-2,6-disulfonic acid. Its function is as follows. Catalyzes the transmethylation of nonepinephrine (noradrenaline) to form epinephrine (adrenaline), using S-adenosyl-L-methionine as the methyl donor. Other substrates include phenylethanolamine and octopamine. Also methylates normetanephrine. The chain is Phenylethanolamine N-methyltransferase (PNMT) from Homo sapiens (Human).